We begin with the raw amino-acid sequence, 248 residues long: 2,3-bisphosphoglycerate-dependent phosphoglycerate mutase (248 aa).

Residues 8–15 (RHGESTWN), 21–22 (TG), arginine 60, 87–90 (ERHY), lysine 98, 114–115 (RR), and 183–184 (GN) contribute to the substrate site. Histidine 9 acts as the Tele-phosphohistidine intermediate in catalysis. The Proton donor/acceptor role is filled by glutamate 87.

This sequence belongs to the phosphoglycerate mutase family. BPG-dependent PGAM subfamily. Homodimer.

It carries out the reaction (2R)-2-phosphoglycerate = (2R)-3-phosphoglycerate. It functions in the pathway carbohydrate degradation; glycolysis; pyruvate from D-glyceraldehyde 3-phosphate: step 3/5. In terms of biological role, catalyzes the interconversion of 2-phosphoglycerate and 3-phosphoglycerate. This chain is 2,3-bisphosphoglycerate-dependent phosphoglycerate mutase, found in Ralstonia nicotianae (strain ATCC BAA-1114 / GMI1000) (Ralstonia solanacearum).